Consider the following 207-residue polypeptide: Imidazole glycerol phosphate synthase subunit HisH (207 aa).

The Glutamine amidotransferase type-1 domain maps to 1–206 (MMIVIDYDAG…KEYVYENTAR (206 aa)). C79 serves as the catalytic Nucleophile. Residues H181 and E183 contribute to the active site.

Heterodimer of HisH and HisF.

It localises to the cytoplasm. It catalyses the reaction 5-[(5-phospho-1-deoxy-D-ribulos-1-ylimino)methylamino]-1-(5-phospho-beta-D-ribosyl)imidazole-4-carboxamide + L-glutamine = D-erythro-1-(imidazol-4-yl)glycerol 3-phosphate + 5-amino-1-(5-phospho-beta-D-ribosyl)imidazole-4-carboxamide + L-glutamate + H(+). The catalysed reaction is L-glutamine + H2O = L-glutamate + NH4(+). Its pathway is amino-acid biosynthesis; L-histidine biosynthesis; L-histidine from 5-phospho-alpha-D-ribose 1-diphosphate: step 5/9. Its function is as follows. IGPS catalyzes the conversion of PRFAR and glutamine to IGP, AICAR and glutamate. The HisH subunit catalyzes the hydrolysis of glutamine to glutamate and ammonia as part of the synthesis of IGP and AICAR. The resulting ammonia molecule is channeled to the active site of HisF. This Streptococcus sanguinis (strain SK36) protein is Imidazole glycerol phosphate synthase subunit HisH.